Consider the following 1388-residue polypeptide: Dicer-like protein 2 (1388 aa).

Residues 23–203 enclose the Helicase ATP-binding domain; that stretch reads MLEASMKENI…LLMVESNLDA (181 aa). 36 to 43 contacts ATP; it reads MDTGSGKT. The short motif at 144 to 147 is the DEAH box element; that stretch reads DEAH. Residues 368-537 enclose the Helicase C-terminal domain; it reads KFESLLNFLD…DDERQLQSVS (170 aa). Residues 564–658 form the Dicer dsRNA-binding fold domain; the sequence is AMAHLHHFCA…LPLTKKPELK (95 aa). 2 consecutive RNase III domains span residues 906 to 1059 and 1098 to 1281; these read ISAI…VDGG and NDRL…VDSG. Residues Glu1137, Asp1267, and Glu1270 each coordinate Mg(2+).

It belongs to the helicase family. Dicer subfamily. The cofactor is Mg(2+). Mn(2+) serves as cofactor.

Its function is as follows. Dicer-like endonuclease involved in cleaving double-stranded RNA in the RNA interference (RNAi) pathway. Produces 21 to 25 bp dsRNAs (siRNAs) which target the selective destruction of homologous RNAs leading to sequence-specific suppression of gene expression, called post-transcriptional gene silencing (PTGS). Part of a broad host defense response against viral infection and transposons. The sequence is that of Dicer-like protein 2 (dcl2) from Aspergillus fumigatus (strain ATCC MYA-4609 / CBS 101355 / FGSC A1100 / Af293) (Neosartorya fumigata).